We begin with the raw amino-acid sequence, 556 residues long: F-box protein YDR131C (556 aa).

Residues 1 to 44 form the F-box domain; the sequence is MFDKLPYEIFKQIAWRIPQEDKISLTYVCKRSYESIIPFIYQNL.

As to quaternary structure, interacts with SKP1. Component of the probable SCF(YDR131C) complex containing CDC53, SKP1, RBX1 and YDR131C.

It localises to the vacuole. It participates in protein modification; protein ubiquitination. Its function is as follows. Substrate recognition component of a SCF (SKP1-CUL1-F-box protein) E3 ubiquitin-protein ligase complex which mediates the ubiquitination and subsequent proteasomal degradation of target proteins. Probably recognizes and binds to phosphorylated target proteins. This is F-box protein YDR131C from Saccharomyces cerevisiae (strain ATCC 204508 / S288c) (Baker's yeast).